Here is a 499-residue protein sequence, read N- to C-terminus: Apolipoprotein N-acyltransferase (499 aa).

6 helical membrane passes run 18–38 (FSPY…LIIT), 50–70 (LGFL…YISI), 82–102 (IIII…FVIL), 105–125 (FFFP…AWMI), 156–176 (PIIG…MCVL), and 182–202 (SYYP…LNFF). Residues 217 to 461 (IQGNISQHTY…NDFLLEEVFS (245 aa)) form the CN hydrolase domain. Glutamate 257 serves as the catalytic Proton acceptor. Lysine 320 is an active-site residue. Cysteine 372 serves as the catalytic Nucleophile. The chain crosses the membrane as a helical span at residues 476–496 (LLFFSIICFIISFFIKIKLIF).

This sequence belongs to the CN hydrolase family. Apolipoprotein N-acyltransferase subfamily.

The protein localises to the cell membrane. The enzyme catalyses N-terminal S-1,2-diacyl-sn-glyceryl-L-cysteinyl-[lipoprotein] + a glycerophospholipid = N-acyl-S-1,2-diacyl-sn-glyceryl-L-cysteinyl-[lipoprotein] + a 2-acyl-sn-glycero-3-phospholipid + H(+). Its pathway is protein modification; lipoprotein biosynthesis (N-acyl transfer). Functionally, catalyzes the phospholipid dependent N-acylation of the N-terminal cysteine of apolipoprotein, the last step in lipoprotein maturation. This chain is Apolipoprotein N-acyltransferase, found in Wigglesworthia glossinidia brevipalpis.